A 227-amino-acid chain; its full sequence is H-2 class II histocompatibility antigen, A-U alpha chain (227 aa).

The alpha-1 stretch occupies residues 1-82 (DHVGSYGIVV…KRSNSTPATN (82 aa)). Residues 1-189 (DHVGSYGIVV…IPAPMSELTE (189 aa)) lie on the Extracellular side of the membrane. The alpha-2 stretch occupies residues 83–176 (EAPQATVFPK…GLEEPVLKHW (94 aa)). The region spanning 85-177 (PQATVFPKSP…LEEPVLKHWE (93 aa)) is the Ig-like C1-type domain. A disulfide bridge connects residues Cys-105 and Cys-161. Asn-116 carries an N-linked (GlcNAc...) asparagine glycan. The connecting peptide stretch occupies residues 177–189 (EPEIPAPMSELTE). A helical membrane pass occupies residues 190 to 215 (TVVCALGLSVGLVGIVVGTIFIIQGL). Over 216–227 (RSGGTSRHPGPL) the chain is Cytoplasmic.

This sequence belongs to the MHC class II family.

It is found in the membrane. This Mus musculus (Mouse) protein is H-2 class II histocompatibility antigen, A-U alpha chain (H2-Aa).